Here is a 541-residue protein sequence, read N- to C-terminus: Chaperonin GroEL (541 aa).

Residues 29–32 (TLGP), 86–90 (DGTTT), Gly-413, 476–478 (NAA), and Asp-492 each bind ATP.

This sequence belongs to the chaperonin (HSP60) family. In terms of assembly, forms a cylinder of 14 subunits composed of two heptameric rings stacked back-to-back. Interacts with the co-chaperonin GroES.

It localises to the cytoplasm. It carries out the reaction ATP + H2O + a folded polypeptide = ADP + phosphate + an unfolded polypeptide.. Its function is as follows. Together with its co-chaperonin GroES, plays an essential role in assisting protein folding. The GroEL-GroES system forms a nano-cage that allows encapsulation of the non-native substrate proteins and provides a physical environment optimized to promote and accelerate protein folding. The protein is Chaperonin GroEL of Streptococcus equi subsp. zooepidemicus (strain MGCS10565).